The sequence spans 2043 residues: Autophagy-related protein 2 (2043 aa).

8 disordered regions span residues 111–130 (EKDR…SEAV), 288–341 (SASM…LPQS), 353–392 (IPYD…TDHA), 413–458 (SVPF…SHIY), 469–488 (SAFS…GAWD), 493–563 (AEES…PRGP), 839–863 (TSRA…EPVH), and 1370–1400 (YDLD…SDSP). Over residues 288 to 306 (SASMPSSSASRSPVAPRSP) the composition is skewed to low complexity. A compositionally biased stretch (polar residues) spans 308 to 325 (DNETTAFNPSGLSRSVGS). Low complexity predominate over residues 434–447 (SVHSSSTNRSSGSS). The span at 448–458 (ARDDLAESHIY) shows a compositional bias: basic and acidic residues. Positions 470 to 479 (AFSQTGSQGL) are enriched in polar residues. Positions 517 to 527 (PPQPDRIPSPE) are enriched in pro residues. The span at 528-546 (QPSQDQKRNSPSFYAQDSS) shows a compositional bias: polar residues. A compositionally biased stretch (acidic residues) spans 1370–1392 (YDLDNDFDVPQELGDDADSDLDF).

The protein belongs to the ATG2 family.

It localises to the preautophagosomal structure membrane. The protein resides in the endoplasmic reticulum membrane. The enzyme catalyses a 1,2-diacyl-sn-glycero-3-phosphocholine(in) = a 1,2-diacyl-sn-glycero-3-phosphocholine(out). It catalyses the reaction a 1,2-diacyl-sn-glycero-3-phospho-L-serine(in) = a 1,2-diacyl-sn-glycero-3-phospho-L-serine(out). It carries out the reaction a 1,2-diacyl-sn-glycero-3-phosphoethanolamine(in) = a 1,2-diacyl-sn-glycero-3-phosphoethanolamine(out). Functionally, lipid transfer protein required for autophagosome completion and peroxisome degradation. Tethers the edge of the isolation membrane (IM) to the endoplasmic reticulum (ER) and mediates direct lipid transfer from ER to IM for IM expansion. ATG2 binds to the ER exit site (ERES), which is the membrane source for autophagosome formation, using basic residues in its N-terminal region (NR) and to the expanding edge of the IM through its C-terminal region. The latter binding is assisted by an ATG18-PtdIns3P interaction. ATG2 then extracts phospholipids from the membrane source using its NR and transfers them to ATG9 to the IM through its predicted beta-sheet-rich structure for membrane expansion. The protein is Autophagy-related protein 2 (ATG2) of Chaetomium globosum (strain ATCC 6205 / CBS 148.51 / DSM 1962 / NBRC 6347 / NRRL 1970) (Soil fungus).